The primary structure comprises 61 residues: Large ribosomal subunit protein bL28 (61 aa).

The protein belongs to the bacterial ribosomal protein bL28 family.

The sequence is that of Large ribosomal subunit protein bL28 from Nocardioides sp. (strain ATCC BAA-499 / JS614).